The chain runs to 565 residues: Pentatricopeptide repeat-containing protein At3g20730 (565 aa).

14 PPR repeats span residues 12–46, 47–77, 78–112, 113–147, 148–178, 179–213, 214–248, 249–279, 280–315, 316–351, 352–382, 383–417, 418–448, and 454–484; these read SPSL…GFCS, NLQL…ISKR, DVVS…DVKA, NQFT…NCAG, NLIV…MKER, DLVS…GKKP, DCFT…GFGR, SSAL…TKKR, DLLS…KTKM, DEVV…QIRF, DVAL…MKEK, DVRS…RIKP, NDVT…MINK, and REEH…KEGI. A type E motif; degenerate region spans residues 491 to 565; sequence TWGAFLDACR…NKAPGYSLVY (75 aa).

It belongs to the PPR family. PCMP-E subfamily.

This chain is Pentatricopeptide repeat-containing protein At3g20730 (PCMP-E94), found in Arabidopsis thaliana (Mouse-ear cress).